The following is a 210-amino-acid chain: Prolactin (210 aa).

Residues methionine 1–glycine 23 form the signal peptide. 2 disulfide bridges follow: cysteine 69/cysteine 183 and cysteine 200/cysteine 210.

This sequence belongs to the somatotropin/prolactin family. Pituitary gland.

The protein localises to the secreted. The chain is Prolactin (prl) from Hypophthalmichthys nobilis (Bighead carp).